The sequence spans 337 residues: Putative 4-hydroxythreonine-4-phosphate dehydrogenase (337 aa).

The a divalent metal cation site is built by His-172, His-216, and His-271.

Belongs to the PdxA family. In terms of assembly, homodimer. Requires Zn(2+) as cofactor. The cofactor is Mg(2+). Co(2+) serves as cofactor.

It is found in the cytoplasm. It catalyses the reaction 4-(phosphooxy)-L-threonine + NAD(+) = 3-amino-2-oxopropyl phosphate + CO2 + NADH. Its pathway is cofactor biosynthesis; pyridoxine 5'-phosphate biosynthesis; pyridoxine 5'-phosphate from D-erythrose 4-phosphate: step 4/5. Its function is as follows. Catalyzes the NAD(P)-dependent oxidation of 4-(phosphooxy)-L-threonine (HTP) into 2-amino-3-oxo-4-(phosphooxy)butyric acid which spontaneously decarboxylates to form 3-amino-2-oxopropyl phosphate (AHAP). The polypeptide is Putative 4-hydroxythreonine-4-phosphate dehydrogenase (Pasteurella multocida (strain Pm70)).